The following is a 58-amino-acid chain: UPF0434 protein Sfri_2386 (58 aa).

This sequence belongs to the UPF0434 family.

This is UPF0434 protein Sfri_2386 from Shewanella frigidimarina (strain NCIMB 400).